The sequence spans 323 residues: Tyrosine--tRNA ligase (323 aa).

Residue Tyr36 participates in L-tyrosine binding. The 'HIGH' region signature appears at 41–49 (PSGEIHLGH). Residues Tyr158, Gln162, Asp165, and Gln180 each contribute to the L-tyrosine site. The 'KMSKS' region motif lies at 214 to 218 (KMSSS). Position 217 (Ser217) interacts with ATP.

Belongs to the class-I aminoacyl-tRNA synthetase family. TyrS type 3 subfamily. In terms of assembly, homodimer.

The protein resides in the cytoplasm. The enzyme catalyses tRNA(Tyr) + L-tyrosine + ATP = L-tyrosyl-tRNA(Tyr) + AMP + diphosphate + H(+). Functionally, catalyzes the attachment of tyrosine to tRNA(Tyr) in a two-step reaction: tyrosine is first activated by ATP to form Tyr-AMP and then transferred to the acceptor end of tRNA(Tyr). The chain is Tyrosine--tRNA ligase from Archaeoglobus fulgidus (strain ATCC 49558 / DSM 4304 / JCM 9628 / NBRC 100126 / VC-16).